A 133-amino-acid chain; its full sequence is Large ribosomal subunit protein uL22 (133 aa).

The protein belongs to the universal ribosomal protein uL22 family. Part of the 50S ribosomal subunit.

In terms of biological role, this protein binds specifically to 23S rRNA; its binding is stimulated by other ribosomal proteins, e.g. L4, L17, and L20. It is important during the early stages of 50S assembly. It makes multiple contacts with different domains of the 23S rRNA in the assembled 50S subunit and ribosome. Functionally, the globular domain of the protein is located near the polypeptide exit tunnel on the outside of the subunit, while an extended beta-hairpin is found that lines the wall of the exit tunnel in the center of the 70S ribosome. This chain is Large ribosomal subunit protein uL22, found in Aquifex aeolicus (strain VF5).